We begin with the raw amino-acid sequence, 317 residues long: Integrin-binding sialoprotein (317 aa).

Residues 1-16 (MKTALILLSILGMACA) form the signal peptide. Ser31, Ser67, Ser74, Ser75, Ser94, and Ser100 each carry phosphoserine. Positions 58 to 254 (FPVQGSSDSS…RTTSPPFGKT (197 aa)) are disordered. A compositionally biased stretch (acidic residues) spans 66–102 (SSEENGDDSSEEEEEEEETSNEGENNEESNEDEDSEA). N-linked (GlcNAc...) asparagine glycosylation occurs at Asn104. Thr119 and Thr122 each carry an O-linked (GalNAc...) threonine glycan. Residue Ser149 is modified to Phosphoserine. The segment covering 149–173 (SDEEEEEEEEGNENEESEAEVDENE) has biased composition (acidic residues). Asn177, Asn182, and Asn190 each carry an N-linked (GlcNAc...) asparagine glycan. The span at 222 to 232 (KGTSKTTTSPN) shows a compositional bias: polar residues. 5 O-linked (GalNAc...) threonine glycosylation sites follow: Thr227, Thr228, Thr229, Thr238, and Thr239. Ser280 is subject to Phosphoserine. The short motif at 286–288 (RGD) is the Integrin-binding motif element. Sulfotyrosine is present on residues Tyr313 and Tyr314.

As to quaternary structure, monomer. Interacts with integrins; the interaction promotes cell adhesion. N-glycosylated; glycans consist of sialylated and core-fucosylated bi-, tri- and tetraantennary chains. Post-translationally, O-glycosylated at eight sites; mucin-type glycans contain Gal, GlcNAc, GalNAc and terminal NeuAc. In terms of tissue distribution, expressed in bone (at protein level). Expressed in trophoblast cells of placenta (at protein level). Expressed in brain.

The protein resides in the secreted. In terms of biological role, binds tightly to hydroxyapatite. Appears to form an integral part of the mineralized matrix. Probably important to cell-matrix interaction. Promotes adhesion and migration of various cells via the alpha-V/beta-3 integrin receptor (ITGAV:ITGB3). This is Integrin-binding sialoprotein (IBSP) from Homo sapiens (Human).